The primary structure comprises 666 residues: Probable potassium transport system protein Kup (666 aa).

Helical transmembrane passes span 16 to 36 (GFIIALGIVYGDIGTSPLYTM), 58 to 78 (ISLIIWTLTLITTIKYVLIAL), 100 to 120 (PWLIIPAMIGGATLLSDGALT), 141 to 161 (IYQNQTNVIITTLVILIVLFG), 165 to 185 (FGTGFIGKIFGPVMFIWFSFL), 221 to 241 (IFILGSIFLATTGAEALYSDL), 253 to 273 (WPFVKMCIVLSYCGQAAWILA), 292 to 312 (LTVYVVILATLAAIIASQALI), 343 to 363 (LYIPVINWILFAVTSCTVLYF), 373 to 393 (YGLAITITMLMTTILLNYYLI), 399 to 419 (PFLAHLVMTFFALVEFIFFWA), and 424 to 444 (FMHGGYVVVILALAIVFVMFI).

It belongs to the HAK/KUP transporter (TC 2.A.72) family.

Its subcellular location is the cell membrane. It catalyses the reaction K(+)(in) + H(+)(in) = K(+)(out) + H(+)(out). Functionally, transport of potassium into the cell. Likely operates as a K(+):H(+) symporter. This chain is Probable potassium transport system protein Kup, found in Streptococcus pyogenes serotype M5 (strain Manfredo).